A 386-amino-acid chain; its full sequence is DNA replication and repair protein RecF (386 aa).

30-37 (GANAQGKT) provides a ligand contact to ATP.

The protein belongs to the RecF family.

The protein localises to the cytoplasm. Functionally, the RecF protein is involved in DNA metabolism; it is required for DNA replication and normal SOS inducibility. RecF binds preferentially to single-stranded, linear DNA. It also seems to bind ATP. In Natranaerobius thermophilus (strain ATCC BAA-1301 / DSM 18059 / JW/NM-WN-LF), this protein is DNA replication and repair protein RecF.